Consider the following 469-residue polypeptide: Repressible acid phosphatase (469 aa).

The first 16 residues, 1–16 (MLSILLSLLSLSGTHA), serve as a signal peptide directing secretion. N-linked (GlcNAc...) asparagine glycosylation is found at Asn-23 and Asn-31. His-77 (nucleophile) is an active-site residue. N-linked (GlcNAc...) asparagine glycans are attached at residues Asn-129, Asn-201, Asn-229, Asn-250, and Asn-317. Residue Asp-340 is the Proton donor of the active site. Asn-392 and Asn-447 each carry an N-linked (GlcNAc...) asparagine glycan.

The protein belongs to the histidine acid phosphatase family. Glycosylated during secretion across the membrane.

The protein resides in the secreted. It catalyses the reaction a phosphate monoester + H2O = an alcohol + phosphate. In Kluyveromyces lactis (strain ATCC 8585 / CBS 2359 / DSM 70799 / NBRC 1267 / NRRL Y-1140 / WM37) (Yeast), this protein is Repressible acid phosphatase (PHO5).